The sequence spans 460 residues: Bifunctional protein GlmU (460 aa).

The pyrophosphorylase stretch occupies residues 1 to 229; the sequence is MSKLNIVVLA…VWETTGVNSK (229 aa). UDP-N-acetyl-alpha-D-glucosamine is bound by residues 9–12, Lys23, Gln74, 79–80, 101–103, Gly138, Glu154, Asn169, and Asn227; these read LAAG, GT, and YGD. Asp103 serves as a coordination point for Mg(2+). Asn227 is a binding site for Mg(2+). The interval 230 to 250 is linker; the sequence is VQLAGLERIYQTAQANKLLEQ. An N-acetyltransferase region spans residues 251–460; it reads GVALADPARI…RPVKKPKPKN (210 aa). 2 residues coordinate UDP-N-acetyl-alpha-D-glucosamine: Arg333 and Lys351. His363 functions as the Proton acceptor in the catalytic mechanism. Tyr366 and Asn377 together coordinate UDP-N-acetyl-alpha-D-glucosamine. Acetyl-CoA-binding positions include Ala380, 386-387, Ser405, Ala423, and Arg440; that span reads NY.

The protein in the N-terminal section; belongs to the N-acetylglucosamine-1-phosphate uridyltransferase family. In the C-terminal section; belongs to the transferase hexapeptide repeat family. Homotrimer. It depends on Mg(2+) as a cofactor.

It is found in the cytoplasm. The enzyme catalyses alpha-D-glucosamine 1-phosphate + acetyl-CoA = N-acetyl-alpha-D-glucosamine 1-phosphate + CoA + H(+). The catalysed reaction is N-acetyl-alpha-D-glucosamine 1-phosphate + UTP + H(+) = UDP-N-acetyl-alpha-D-glucosamine + diphosphate. Its pathway is nucleotide-sugar biosynthesis; UDP-N-acetyl-alpha-D-glucosamine biosynthesis; N-acetyl-alpha-D-glucosamine 1-phosphate from alpha-D-glucosamine 6-phosphate (route II): step 2/2. It participates in nucleotide-sugar biosynthesis; UDP-N-acetyl-alpha-D-glucosamine biosynthesis; UDP-N-acetyl-alpha-D-glucosamine from N-acetyl-alpha-D-glucosamine 1-phosphate: step 1/1. It functions in the pathway bacterial outer membrane biogenesis; LPS lipid A biosynthesis. Functionally, catalyzes the last two sequential reactions in the de novo biosynthetic pathway for UDP-N-acetylglucosamine (UDP-GlcNAc). The C-terminal domain catalyzes the transfer of acetyl group from acetyl coenzyme A to glucosamine-1-phosphate (GlcN-1-P) to produce N-acetylglucosamine-1-phosphate (GlcNAc-1-P), which is converted into UDP-GlcNAc by the transfer of uridine 5-monophosphate (from uridine 5-triphosphate), a reaction catalyzed by the N-terminal domain. The chain is Bifunctional protein GlmU from Nitrosospira multiformis (strain ATCC 25196 / NCIMB 11849 / C 71).